A 451-amino-acid chain; its full sequence is Tubulin alpha chain (451 aa).

Position 11 (Gln-11) interacts with GTP. Lys-40 bears the N6-acetyllysine mark. Residues Glu-71, Gly-144, Thr-145, Thr-179, Asn-206, and Asn-228 each contribute to the GTP site. Glu-71 serves as a coordination point for Mg(2+). The active site involves Glu-254. The tract at residues Tyr-432–Tyr-451 is disordered.

Belongs to the tubulin family. As to quaternary structure, dimer of alpha and beta chains. A typical microtubule is a hollow water-filled tube with an outer diameter of 25 nm and an inner diameter of 15 nM. Alpha-beta heterodimers associate head-to-tail to form protofilaments running lengthwise along the microtubule wall with the beta-tubulin subunit facing the microtubule plus end conferring a structural polarity. Microtubules usually have 13 protofilaments but different protofilament numbers can be found in some organisms and specialized cells. Mg(2+) serves as cofactor. In terms of processing, undergoes a tyrosination/detyrosination cycle, the cyclic removal and re-addition of a C-terminal tyrosine residue by the enzymes tubulin tyrosine carboxypeptidase (TTCP) and tubulin tyrosine ligase (TTL), respectively. Acetylation of alpha chains at Lys-40 stabilizes microtubules and affects affinity and processivity of microtubule motors. This modification has a role in multiple cellular functions, ranging from cell motility, cell cycle progression or cell differentiation to intracellular trafficking and signaling.

The protein localises to the cytoplasm. Its subcellular location is the cytoskeleton. The catalysed reaction is GTP + H2O = GDP + phosphate + H(+). Tubulin is the major constituent of microtubules, a cylinder consisting of laterally associated linear protofilaments composed of alpha- and beta-tubulin heterodimers. Microtubules grow by the addition of GTP-tubulin dimers to the microtubule end, where a stabilizing cap forms. Below the cap, tubulin dimers are in GDP-bound state, owing to GTPase activity of alpha-tubulin. This chain is Tubulin alpha chain (TBA), found in Daucus carota (Wild carrot).